A 42-amino-acid polypeptide reads, in one-letter code: Alpha-lactalbumin I (42 aa).

Positions 1-42 (IDYRKCQASQILKEHGMDKVIPLPELVCTMFHISGLSPQAEV) constitute a C-type lysozyme domain.

It belongs to the glycosyl hydrolase 22 family. Lactose synthase (LS) is a heterodimer of a catalytic component, beta1,4-galactosyltransferase (beta4Gal-T1) and a regulatory component, alpha-lactalbumin (LA). Mammary gland specific. Secreted in milk.

It is found in the secreted. Functionally, regulatory subunit of lactose synthase, changes the substrate specificity of galactosyltransferase in the mammary gland making glucose a good acceptor substrate for this enzyme. This enables LS to synthesize lactose, the major carbohydrate component of milk. In other tissues, galactosyltransferase transfers galactose onto the N-acetylglucosamine of the oligosaccharide chains in glycoproteins. This is Alpha-lactalbumin I (LALBA) from Macropus giganteus (Eastern gray kangaroo).